The primary structure comprises 447 residues: GTPase Der (447 aa).

2 consecutive EngA-type G domains span residues P3–E167 and I180–N353. GTP contacts are provided by residues G9–S16, D56–F60, N119–E122, G186–S193, D233–L237, and N298–D301. The region spanning R354–S438 is the KH-like domain.

Belongs to the TRAFAC class TrmE-Era-EngA-EngB-Septin-like GTPase superfamily. EngA (Der) GTPase family. In terms of assembly, associates with the 50S ribosomal subunit.

GTPase that plays an essential role in the late steps of ribosome biogenesis. The chain is GTPase Der from Acidovorax sp. (strain JS42).